Here is an 815-residue protein sequence, read N- to C-terminus: Protein SMAX1-LIKE 3 (815 aa).

The Clp R domain occupies 8–171 (VEQALTADAA…TKVEQAVSLE (164 aa)). Repeat stretches follow at residues 12–80 (LTAD…LNRL) and 99–171 (ISNA…VSLE). Residues 750–769 (SRACSPPSNQKSDGSDQPED) are disordered. The EAR motif lies at 778-782 (LDLNL).

This sequence belongs to the ClpA/ClpB family. In terms of assembly, interacts probably with TPL/TPR in an EAR-motif dependent manner. In terms of tissue distribution, expressed in roots and seedlings.

Its function is as follows. May function in a transcriptional corepressor complex. The chain is Protein SMAX1-LIKE 3 from Arabidopsis thaliana (Mouse-ear cress).